Reading from the N-terminus, the 1144-residue chain is MTEDQGFSDPEYSAEYSAEYSVSLPSDPDRGVGRTHEISVRNSGSCLCLPRFMRLTFVPESLENLYQTYFKRQRHETLLVLVVFAALFDCYVVVMCAVVFSSDKLAPLMVAGVGLVLDIILFVLCKKGLLPDRVSRKVVPYLLWLLITAQIFSYLGLNFSRAHAASDTVGWQAFFVFSFFITLPLSLSPIVIISVVSCVVHTLVLGVTVAQQQQDELEGMQLLREILANVFLYLCAIIVGIMSYYMADRKHRKAFLEARQSLEVKMNLEEQSQQQENLMLSILPKHVADEMLKDMKKDESQKDQQQFNTMYMYRHENVSILFADIVGFTQLSSACSAQELVKLLNELFARFDKLAAKYHQLRIKILGDCYYCICGLPDYREDHAVCSILMGLAMVEAISYVREKTKTGVDMRVGVHTGTVLGGVLGQKRWQYDVWSTDVTVANKMEAGGIPGRVHISQSTMDCLKGEFDVEPGDGGSRCDYLDEKGIETYLIIASKPEVKKTAQNGLNGSALPNGAPASKPSSPALIETKEPNGSAHASGSTSEEAEEQEAQADNPSFPNPRRRLRLQDLADRVVDASEDEHELNQLLNEALLERESAQVVKKRNTFLLTMRFMDPEMETRYSVEKEKQSGAAFSCSCVVLFCTAMVEILIDPWLMTNYVTFVVGEVLLLILTICSMAAIFPRAFPKKLVAFSSWIDRTRWARNTWAMLAIFILVMANVVDMLSCLQYYMGPYNVTTGIELDGGCMENPKYYNYVAVLSLIATIMLVQVSHMVKLTLMLLVTGAVTAINLYAWCPVFDEYDHKRFQEKDSPMVALEKMQVLSTPGLNGTDSRLPLVPSKYSMTVMMFVMMLSFYYFSRHVEKLARTLFLWKIEVHDQKERVYEMRRWNEALVTNMLPEHVARHFLGSKKRDEELYSQSYDEIGVMFASLPNFADFYTEESINNGGIECLRFLNEIISDFDSLLDNPKFRVITKIKTIGSTYMAASGVTPDVNTNGFTSSSKEEKSDKERWQHLADLADFALAMKDTLTNINNQSFNNFMLRIGMNKGGVLAGVIGARKPHYDIWGNTVNVASRMESTGVMGNIQVVEETQVILREYGFRFVRRGPIFVKGKGELLTFFLKGRDRPAAFPNGSSVTLPHQVVDNP.

The Cytoplasmic segment spans residues 1-79 (MTEDQGFSDP…FKRQRHETLL (79 aa)). 5 consecutive transmembrane segments (helical) span residues 80-100 (VLVV…AVVF), 105-125 (LAPL…FVLC), 139-159 (VPYL…GLNF), 173-193 (AFFV…IVII), and 226-246 (ILAN…SYYM). The Mg(2+) site is built by aspartate 324, isoleucine 325, and aspartate 368. ATP-binding positions include 324–329 (DIVGFT) and 366–368 (LGD). The helical transmembrane segment at 381–401 (EDHAVCSILMGLAMVEAISYV) threads the bilayer. Over 402-630 (REKTKTGVDM…RYSVEKEKQS (229 aa)) the chain is Cytoplasmic. Arginine 412 contributes to the ATP binding site. A Glycyl lysine isopeptide (Lys-Gly) (interchain with G-Cter in SUMO3) cross-link involves residue lysine 465. The tract at residues 504-563 (QNGLNGSALPNGAPASKPSSPALIETKEPNGSAHASGSTSEEAEEQEAQADNPSFPNPRR) is disordered. The residue at position 523 (serine 523) is a Phosphoserine. Low complexity predominate over residues 534-543 (GSAHASGSTS). Serine 578 carries the post-translational modification Phosphoserine. The next 3 helical transmembrane spans lie at 631–651 (GAAF…EILI), 662–682 (FVVG…AIFP), and 706–726 (WAML…LSCL). The N-linked (GlcNAc...) asparagine glycan is linked to asparagine 734. 3 consecutive transmembrane segments (helical) span residues 755–775 (VAVL…MVKL), 777–797 (LMLL…CPVF), and 833–853 (LPLV…MLSF). At 854-1144 (YYFSRHVEKL…TLPHQVVDNP (291 aa)) the chain is on the cytoplasmic side. Residues lysine 975, 1062 to 1064 (DIW), and 1069 to 1073 (NVASR) each bind ATP. A Phosphoserine; by CaMK2 modification is found at serine 1076. Lysine 1109 contributes to the ATP binding site.

This sequence belongs to the adenylyl cyclase class-4/guanylyl cyclase family. Mg(2+) serves as cofactor. It depends on Mn(2+) as a cofactor. Post-translationally, N-glycosylated. In terms of processing, sumoylated. Sumoylation is required for targeting ot olfactory cilia. Rapidly phosphorylated after stimulation by odorants or forskolin. Phosphorylation by CaMK2 at Ser-1076 down-regulates enzyme activity. In terms of tissue distribution, detected on cilia on the olfactory epithelium (at protein level). Detected on cilia on the olfactory epithelium.

It localises to the cell membrane. The protein localises to the golgi apparatus. Its subcellular location is the cell projection. The protein resides in the cilium. It is found in the cytoplasm. It carries out the reaction ATP = 3',5'-cyclic AMP + diphosphate. With respect to regulation, specifically activated by the G alpha protein GNAL/G(olf) in signaling cascades triggered by odorant receptors. Activated by forskolin. After forskolin treatment, activity is further increased by calcium/calmodulin. In the absence of forskolin, calcium/calmodulin has little effect on enzyme activity. Functionally, catalyzes the formation of the signaling molecule cAMP in response to G-protein signaling. Participates in signaling cascades triggered by odorant receptors via its function in cAMP biosynthesis: specifically activated by G alpha protein GNAL/G(olf) in olfactory epithelium. Required for the perception of odorants. Required for normal sperm motility and normal male fertility. Plays a role in regulating insulin levels and body fat accumulation in response to a high fat diet. This is Adenylate cyclase type 3 from Rattus norvegicus (Rat).